A 1434-amino-acid polypeptide reads, in one-letter code: Pleiotropic drug resistance protein 1 (1434 aa).

The tract at residues 1–22 (MEPANLSNLRGSSLRGSTRGSL) is disordered. The ABC transporter 1 domain occupies 161-434 (LNSLHILSSR…FESMGFKCPQ (274 aa)). 194–201 (GPPSSGKT) is an ATP binding site. The region spanning 512–725 (ELLKVCTERE…SVNSILVNEF (214 aa)) is the ABC transmembrane type-2 1 domain. Helical transmembrane passes span 530–550 (FVYM…MTLF), 563–583 (GGIY…NGMS), 618–638 (IPVT…VIGF), 649–669 (FLLL…IGAV), 675–695 (VAST…GFVL), 702–722 (SWWI…SILV), and 760–780 (IGVG…SLAL). The segment at 793–824 (LPEDGENAENGEVSSQITSTDGGDSISESQNN) is disordered. The segment covering 804-824 (EVSSQITSTDGGDSISESQNN) has biased composition (polar residues). The ABC transporter 2 domain occupies 837–1089 (ITFDDVVYSV…HLIKYFESNP (253 aa)). 882-889 (GVSGAGKT) lines the ATP pocket. Positions 1162–1376 (TQCVACLWKQ…TLYGLVASQF (215 aa)) constitute an ABC transmembrane type-2 2 domain. The next 7 helical transmembrane spans lie at 1181 to 1201 (YTAV…TMFW), 1221 to 1241 (YAAV…VVAI), 1269 to 1289 (IPYI…MIGF), 1296 to 1316 (FFWY…YGMM), 1326 to 1346 (VASI…GFII), 1357 to 1377 (WYYW…SQFG), and 1406 to 1426 (VVAA…AFAI).

This sequence belongs to the ABC transporter superfamily. ABCG family. PDR (TC 3.A.1.205) subfamily.

It is found in the membrane. Functionally, may be a general defense protein. In Nicotiana tabacum (Common tobacco), this protein is Pleiotropic drug resistance protein 1 (PDR1).